The primary structure comprises 513 residues: Melianol synthase CYP71BQ4 (513 aa).

The chain crosses the membrane as a helical span at residues 10–30 (MLHLPSLPVLLSFLLFLLMLI). Cys451 serves as a coordination point for heme.

The protein belongs to the cytochrome P450 family. Heme is required as a cofactor. In terms of tissue distribution, accumulates in mature fruits and in juice vesicles.

Its subcellular location is the membrane. The catalysed reaction is dihydroniloticin + 2 reduced [NADPH--hemoprotein reductase] + 2 O2 = melianol + 2 oxidized [NADPH--hemoprotein reductase] + 3 H2O + 2 H(+). It participates in secondary metabolite biosynthesis; terpenoid biosynthesis. Its function is as follows. Monooxygenase involved in the biosynthesis of limonoids triterpene natural products such as limonin, a compound with insecticidal activity responsible for the bitter taste in citrus. Catalyzes the conversion of dihydroniloticin to the protolimonoid melianol. This is Melianol synthase CYP71BQ4 from Citrus sinensis (Sweet orange).